We begin with the raw amino-acid sequence, 413 residues long: Multidrug resistance protein MdtA (413 aa).

A signal peptide spans 1–32 (MNAKRIRGLLIFAAVIAIAVLIWRHFTQTSPA). Residues 32–46 (AAPGTSEQHAARTSH) are compositionally biased toward polar residues. Residues 32-59 (AAPGTSEQHAARTSHSGNNSSGNGGGRR) are disordered.

The protein belongs to the membrane fusion protein (MFP) (TC 8.A.1) family. As to quaternary structure, part of a tripartite efflux system composed of MdtA, MdtB and MdtC.

It localises to the cell inner membrane. The polypeptide is Multidrug resistance protein MdtA (Pectobacterium carotovorum subsp. carotovorum (strain PC1)).